The chain runs to 329 residues: Serine, glycine and glutamine-rich protein (329 aa).

An N-terminal signal peptide occupies residues 1 to 16 (MKTVLLFVVLVGLAYC). A compositionally biased stretch (low complexity) spans 38-48 (SSSSSSSSSSS). Positions 38-80 (SSSSSSSSSSSSGGGGSSGGGASGGGGGSSSGGGGASGGGGGG) are disordered. Residues 49–80 (SGGGGSSGGGASGGGGGSSSGGGGASGGGGGG) are compositionally biased toward gly residues.

Prismatic layer of shell (at protein level). Expressed primarily in the mantle with highest level in the mantle edge and lower level in the mantle pallium.

The protein resides in the secreted. The sequence is that of Serine, glycine and glutamine-rich protein from Pinctada maxima (Silver-lipped pearl oyster).